Here is a 264-residue protein sequence, read N- to C-terminus: MKLLVVFAMCVPAASAGVVELSADSMSPSNQDLEDKLYNSILTGDYDSAVRKSLEYESQGQGSIVQNVVNNLIIDKRRNTMEYCYKLWVGNGQDIVKKYFPLSFRLIMAGNYVKLIYRNYNLALKLGSTTNPSNERIAYGDGVDKHTDLVSWKFITLWENNRVYFKAHNTKYNQYLKMSTSTCNCNARDRVVYGGNSADSTREQWFFQPAKYENDVLFFIYNRQFNDALELGTIVNASGDRKAVGHDGEVAGLPDIYSWFITPF.

A signal peptide spans 1–16 (MKLLVVFAMCVPAASA).

This sequence belongs to the 30 kDa lipoprotein family.

It is found in the secreted. This Bombyx mori (Silk moth) protein is Low molecular mass lipoprotein PBMHP-12.